Here is a 147-residue protein sequence, read N- to C-terminus: Hemoglobin subunit beta (147 aa).

The Globin domain maps to 3–147 (EWTDFERATI…VVSSLGRQYH (145 aa)). The heme b site is built by histidine 64 and histidine 93.

It belongs to the globin family. As to quaternary structure, hb 1 is a heterotetramer of two alpha-1 and two beta chains. Hb 2 is a heterotetramer of two alpha-2 and two beta chains. In terms of tissue distribution, red blood cells.

In terms of biological role, involved in oxygen transport from gills to the various peripheral tissues. This chain is Hemoglobin subunit beta (hbb), found in Cottoperca gobio (Frogmouth).